A 1354-amino-acid polypeptide reads, in one-letter code: Enhancer of mRNA-decapping protein 4 homolog (1354 aa).

A disordered region spans residues 18–38; the sequence is PLSASSSPPPSVHRSPRCGKA. At S32 the chain carries Phosphoserine. WD repeat units follow at residues 309 to 348 and 363 to 406; these read EEDS…VRNH and CSLF…CLQT. The disordered stretch occupies residues 552–581; it reads ERSSLNSKRSQTPEDNLLIKEEPESPNSGT. Residues 554 to 565 are compositionally biased toward polar residues; the sequence is SSLNSKRSQTPE. S561 is modified (phosphoserine). T563 carries the phosphothreonine modification. At S576 the chain carries Phosphoserine. The residue at position 581 (T581) is a Phosphothreonine. S759, S762, and S763 each carry phosphoserine. The stretch at 765 to 803 forms a coiled coil; it reads SREVQEIMATQDDADAYEAELENLDDDDDDEEEELANSS. Residues 788–799 are compositionally biased toward acidic residues; sequence LDDDDDDEEEEL. Disordered regions lie at residues 788–811 and 838–884; these read LDDD…AVDG and NTNN…AGGT. Low complexity predominate over residues 853 to 884; sequence NNNTSVGSNSNNNTATTLSTSNTSSSNNAGGT. 3 coiled-coil regions span residues 893–936, 969–1036, and 1159–1188; these read ELNA…HSKQ, NEHK…QAQM, and KHRT…QVQE. S1207 is subject to Phosphoserine. T1211 and T1317 each carry phosphothreonine. Y1320 carries the phosphotyrosine modification.

It belongs to the WD repeat EDC4 family. In terms of assembly, homodimer. Interacts with Dcp1 and Dcp2. Interacts with Gyf.

Its subcellular location is the cytoplasm. The protein localises to the P-body. In terms of biological role, in the process of mRNA degradation, seems to play a role in mRNA decapping. Required for silencing a subset of endogenous miRNA targets. The chain is Enhancer of mRNA-decapping protein 4 homolog (Ge-1) from Drosophila melanogaster (Fruit fly).